The chain runs to 239 residues: Probable transcriptional regulatory protein Sca_0317 (239 aa).

This sequence belongs to the TACO1 family. YeeN subfamily.

The protein localises to the cytoplasm. The protein is Probable transcriptional regulatory protein Sca_0317 of Staphylococcus carnosus (strain TM300).